Reading from the N-terminus, the 371-residue chain is Queuine tRNA-ribosyltransferase (371 aa).

Aspartate 90 (proton acceptor) is an active-site residue. Substrate contacts are provided by residues 90 to 94 (DSGGF), aspartate 144, glutamine 189, and glycine 215. An RNA binding region spans residues 246 to 252 (GVGTPEN). The active-site Nucleophile is the aspartate 265. An RNA binding; important for wobble base 34 recognition region spans residues 270–274 (TRNAR). The Zn(2+) site is built by cysteine 303, cysteine 305, cysteine 308, and histidine 334.

This sequence belongs to the queuine tRNA-ribosyltransferase family. As to quaternary structure, homodimer. Within each dimer, one monomer is responsible for RNA recognition and catalysis, while the other monomer binds to the replacement base PreQ1. Zn(2+) serves as cofactor.

It carries out the reaction 7-aminomethyl-7-carbaguanine + guanosine(34) in tRNA = 7-aminomethyl-7-carbaguanosine(34) in tRNA + guanine. It participates in tRNA modification; tRNA-queuosine biosynthesis. In terms of biological role, catalyzes the base-exchange of a guanine (G) residue with the queuine precursor 7-aminomethyl-7-deazaguanine (PreQ1) at position 34 (anticodon wobble position) in tRNAs with GU(N) anticodons (tRNA-Asp, -Asn, -His and -Tyr). Catalysis occurs through a double-displacement mechanism. The nucleophile active site attacks the C1' of nucleotide 34 to detach the guanine base from the RNA, forming a covalent enzyme-RNA intermediate. The proton acceptor active site deprotonates the incoming PreQ1, allowing a nucleophilic attack on the C1' of the ribose to form the product. After dissociation, two additional enzymatic reactions on the tRNA convert PreQ1 to queuine (Q), resulting in the hypermodified nucleoside queuosine (7-(((4,5-cis-dihydroxy-2-cyclopenten-1-yl)amino)methyl)-7-deazaguanosine). This is Queuine tRNA-ribosyltransferase from Helicobacter pylori (strain P12).